Here is an 873-residue protein sequence, read N- to C-terminus: Bifunctional uridylyltransferase/uridylyl-removing enzyme (873 aa).

The uridylyltransferase stretch occupies residues 1–332; that stretch reads MAFQSPLTFN…NGGETEPAVI (332 aa). A uridylyl-removing region spans residues 333–692; it reads INEDFQRRGR…MSKKATRGGT (360 aa). One can recognise an HD domain in the interval 451 to 573; that stretch reads VDEHSVRLLN…VRDEERLEYL (123 aa). ACT domains lie at 693 to 773 and 800 to 873; these read EVFV…VKTR and LMEL…ELAP.

The protein belongs to the GlnD family. Mg(2+) is required as a cofactor.

It carries out the reaction [protein-PII]-L-tyrosine + UTP = [protein-PII]-uridylyl-L-tyrosine + diphosphate. It catalyses the reaction [protein-PII]-uridylyl-L-tyrosine + H2O = [protein-PII]-L-tyrosine + UMP + H(+). Uridylyltransferase (UTase) activity is inhibited by glutamine, while glutamine activates uridylyl-removing (UR) activity. Functionally, modifies, by uridylylation and deuridylylation, the PII regulatory proteins (GlnB and homologs), in response to the nitrogen status of the cell that GlnD senses through the glutamine level. Under low glutamine levels, catalyzes the conversion of the PII proteins and UTP to PII-UMP and PPi, while under higher glutamine levels, GlnD hydrolyzes PII-UMP to PII and UMP (deuridylylation). Thus, controls uridylylation state and activity of the PII proteins, and plays an important role in the regulation of nitrogen assimilation and metabolism. The chain is Bifunctional uridylyltransferase/uridylyl-removing enzyme from Vibrio vulnificus (strain YJ016).